We begin with the raw amino-acid sequence, 494 residues long: Lysine--tRNA ligase (494 aa).

Residues glutamate 407 and glutamate 414 each coordinate Mg(2+).

This sequence belongs to the class-II aminoacyl-tRNA synthetase family. As to quaternary structure, homodimer. The cofactor is Mg(2+).

It is found in the cytoplasm. The catalysed reaction is tRNA(Lys) + L-lysine + ATP = L-lysyl-tRNA(Lys) + AMP + diphosphate. The sequence is that of Lysine--tRNA ligase from Lactococcus lactis subsp. lactis (strain IL1403) (Streptococcus lactis).